Reading from the N-terminus, the 365-residue chain is Aminomethyltransferase (365 aa).

It belongs to the GcvT family. As to quaternary structure, the glycine cleavage system is composed of four proteins: P, T, L and H.

It catalyses the reaction N(6)-[(R)-S(8)-aminomethyldihydrolipoyl]-L-lysyl-[protein] + (6S)-5,6,7,8-tetrahydrofolate = N(6)-[(R)-dihydrolipoyl]-L-lysyl-[protein] + (6R)-5,10-methylene-5,6,7,8-tetrahydrofolate + NH4(+). Functionally, the glycine cleavage system catalyzes the degradation of glycine. This Chlorobium phaeobacteroides (strain DSM 266 / SMG 266 / 2430) protein is Aminomethyltransferase.